The following is a 174-amino-acid chain: MLRGFAPTGVHVVALASGVFLSGAMFSVSAIMIPTLLDTNKEPAGLTTQWARLYHYGSVLMPSMSVAIAAVYGFASTQYRQSPQGMRCLAAGALTLAIAPYTWLAMIPTNNALFAMAASAPGFAGMQDANEKARDLVMKWVVLHSIRSILPLAGAIMGFTGISSGQEGVVGSAN.

The next 4 membrane-spanning stretches (helical) occupy residues 13 to 33, 56 to 76, 88 to 108, and 140 to 160; these read VALA…AIMI, YGSV…GFAS, CLAA…AMIP, and WVVL…MGFT.

This sequence belongs to the anthrone oxygenase family.

Its subcellular location is the membrane. The enzyme catalyses emodin anthrone + O2 = emodin + H2O + H(+). Anthrone oxygenase; part of the ergochrome gene cluster responsible for the typical purple-black color of the ergot sclerotia. The ergochrome gene cluster produces several ergot pigments including the yellow ergochrome secalonic acid and its derivatives, as well as the red anthraquinones endocrocin and clavorubin. The pathway begins with the synthesis of atrochrysone thioester by the polyketide synthase (PKS) CPUR_05437. The atrochrysone carboxyl ACP thioesterase CPUR_05436 then breaks the thioester bond and releases the atrochrysone carboxylic acid from CPUR_05437. The decarboxylase CPUR_05434 then catalyzes the concerted decarboxylation-elimination required to convert atochrysone carboxylic acid into emodin anthrone, which is further oxidized to emodin by the anthrone oxygenase CPUR_05435. Emodin is further modified to yield monodictyphenone via several steps involving CPUR_05427, CPUR_05428, CPUR_05429 and CPUR_05430. The short chain dehydrogenase/reductase CPUR_05418 then catalyzes the C-5 ketoreduction to give the xanthone skeleton of the monomeric units. Ergochromes formation requires further dimerization steps of different xanthone units, probably catalyzed by the cytochrome P450 monooxygenase CPUR_05419. CPUR_05425, CPUR_05426 and CPUR_05431 are unique to Claviceps, thus it is likely that they are involved in further modification of xanthone units or in their dimerization. The yellow ergochromes and the red anthraquinone pigments endocrocin and clavorubin are products from the same PKS derived precursors and the latter are likely shunt products in the pathway of xanthone biosynthesis. It is proposed that atrochrysone carboxylic acid released from the PKS CPUR_05437 can also be converted to endocrocin anthrone which is further oxidized into endocrocin by CPUR_05435. Endocrocin could be then modified to clavorubin, possibly by CPUR_05423 and CPUR_05431. Clavorubin is the principal anthraquinone metabolite produced by the cluster with a much higher yield compared to endocrocin. The protein is Anthrone oxygenase CPUR_05435 of Claviceps purpurea (strain 20.1) (Ergot fungus).